The sequence spans 132 residues: Probable prefoldin subunit 4 (132 aa).

This sequence belongs to the prefoldin subunit beta family. In terms of assembly, heterohexamer of two PFD-alpha type and four PFD-beta type subunits.

In terms of biological role, binds specifically to cytosolic chaperonin (c-CPN) and transfers target proteins to it. Binds to nascent polypeptide chain and promotes folding in an environment in which there are many competing pathways for nonnative proteins. This Dictyostelium discoideum (Social amoeba) protein is Probable prefoldin subunit 4 (pfdn4).